The sequence spans 195 residues: Thioredoxin reductase-like selenoprotein T (195 aa).

An N-terminal signal peptide occupies residues 1-19; sequence MRLLLLLLVAASAMVRSEA. The segment at residues 46–49 is a cross-link (cysteinyl-selenocysteine (Cys-Sec)); the sequence is CVSU. U49 is a non-standard amino acid (selenocysteine). A helical transmembrane segment spans residues 85 to 103; the sequence is IASFLSVFKLVLIGLIIVG.

Belongs to the SelWTH family. Selenoprotein T subfamily. Post-translationally, may contain a selenide-sulfide bond between Cys-46 and Sec-49. This bond is speculated to serve as redox-active pair. In terms of tissue distribution, ubiquitous. Highly expressed in the endocrine pancreas.

The protein localises to the endoplasmic reticulum membrane. It carries out the reaction [thioredoxin]-dithiol + NADP(+) = [thioredoxin]-disulfide + NADPH + H(+). Functionally, selenoprotein with thioredoxin reductase-like oxidoreductase activity. Protects dopaminergic neurons against oxidative stress and cell death. Involved in ADCYAP1/PACAP-induced calcium mobilization and neuroendocrine secretion. Plays a role in fibroblast anchorage and redox regulation. In gastric smooth muscle, modulates the contraction processes through the regulation of calcium release and MYLK activation. In pancreatic islets, involved in the control of glucose homeostasis, contributes to prolonged ADCYAP1/PACAP-induced insulin secretion. The protein is Thioredoxin reductase-like selenoprotein T of Homo sapiens (Human).